Consider the following 1067-residue polypeptide: Protein CLEC16A homolog (1067 aa).

The FPL domain occupies 50 to 199 (LRCIAEILIW…AVRTISLNVY (150 aa)). A helical transmembrane segment spans residues 333–353 (SIVALFLLSLVFLVVSHAPLV). Residues 409-418 (SSSSYALSED) show a composition bias toward low complexity. 4 disordered regions span residues 409–434 (SSSS…LDSQ), 837–861 (ASSS…PMFS), 876–993 (SNSA…SRSH), and 1037–1067 (QSSE…IETV). The segment covering 421–432 (VESSSPATTELD) has biased composition (polar residues). A compositionally biased stretch (polar residues) spans 876-888 (SNSAGVSRTQMAP). Over residues 917–926 (RADHSDRERS) the composition is skewed to basic and acidic residues. Over residues 927-947 (PSVSMGSHSSSQSRENSQPRS) the composition is skewed to low complexity. Over residues 951–974 (RSRESSPRMPRPRSEEIPLEDFQH) the composition is skewed to basic and acidic residues. The segment covering 975 to 993 (SRNNSPHSRGNPSPASRSH) has biased composition (polar residues). A compositionally biased stretch (basic and acidic residues) spans 1057-1067 (EGRRRGAIETV).

It belongs to the CLEC16A/gop-1 family. Interacts with the class C Vps-HOPS complex components; Car, Dor and Vps16a.

It localises to the cytoplasmic vesicle. The protein localises to the autophagosome membrane. The protein resides in the late endosome membrane. It is found in the golgi apparatus membrane. Required for mitophagy, autophagy and endosome maturation, possibly by acting in multiple membrane trafficking pathways. Required for endosome trafficking and maturation. Functions with the class C Vps-HOPS complex member Vps16a to promote endosomal maturation into degradative late endosomes and lysosomes. In response to starvation, functions at an early stage of autophagy to promote autophagosome growth and efficient autophagy. Essential for the recruitment of lva-positive Golgi elements to autophagosomes. Likely to function by promoting membrane traffic from the Golgi complex to the developing autophagosomes. Also regulates synaptic growth at the neuromuscular junctions (NMJ) by down-regulating BMP signaling. This chain is Protein CLEC16A homolog, found in Drosophila melanogaster (Fruit fly).